A 181-amino-acid chain; its full sequence is DNA-packaging protein NU1 homolog (181 aa).

It to phage lambda DNA packaging protein NU1.

The protein is DNA-packaging protein NU1 homolog (nohD) of Escherichia coli (strain K12).